Consider the following 170-residue polypeptide: uncharacterized protein (170 aa).

This is an uncharacterized protein from Homo sapiens (Human).